Reading from the N-terminus, the 339-residue chain is MVREEVAGSTQTLQWKCVESRVDSKRLYYGRFILSPLRKGQADTVGIALRRALLGEIEGACITRAKFGSVPHEYSTIAGIEESVQEILLNLKEIVLRSNLYGVRDASICVKGPRYITAQDIILPPSVEIVDTAQPIANLTEPIDFCIDLQIKRDRGYQTELRKNYQDGSYPIDAVSMPVRNVNYSIFSCGNGNEKHEILFLEIWTNGSLTPKEALYEASRNLIDLFLPFLHAEEEGASFEENKNRFTPPLFTFQKRLTNLKKNKKGIPLNCIFIDQLELTSRTYNCLKRANIHTLLDLLSKTEEDLLRIDSFRMEDRKHIWDTLEKHLPIDLLKNKLSF.

The interval 1–233 (MVREEVAGST…DLFLPFLHAE (233 aa)) is alpha N-terminal domain (alpha-NTD). An alpha C-terminal domain (alpha-CTD) region spans residues 264–339 (KKGIPLNCIF…IDLLKNKLSF (76 aa)).

The protein belongs to the RNA polymerase alpha chain family. In plastids the minimal PEP RNA polymerase catalytic core is composed of four subunits: alpha, beta, beta', and beta''. When a (nuclear-encoded) sigma factor is associated with the core the holoenzyme is formed, which can initiate transcription.

It is found in the plastid. It localises to the chloroplast. The catalysed reaction is RNA(n) + a ribonucleoside 5'-triphosphate = RNA(n+1) + diphosphate. Its function is as follows. DNA-dependent RNA polymerase catalyzes the transcription of DNA into RNA using the four ribonucleoside triphosphates as substrates. In Aegilops uniaristata (Goatgrass), this protein is DNA-directed RNA polymerase subunit alpha.